The primary structure comprises 73 residues: Exodeoxyribonuclease 7 small subunit (73 aa).

It belongs to the XseB family. As to quaternary structure, heterooligomer composed of large and small subunits.

It localises to the cytoplasm. It carries out the reaction Exonucleolytic cleavage in either 5'- to 3'- or 3'- to 5'-direction to yield nucleoside 5'-phosphates.. Bidirectionally degrades single-stranded DNA into large acid-insoluble oligonucleotides, which are then degraded further into small acid-soluble oligonucleotides. The polypeptide is Exodeoxyribonuclease 7 small subunit (Streptococcus mutans serotype c (strain ATCC 700610 / UA159)).